The chain runs to 572 residues: Methionine--tRNA ligase (572 aa).

The 'HIGH' region signature appears at 11–21 (PYINGVKHLGN). Positions 143, 146, 156, and 159 each coordinate Zn(2+). The 'KMSKS' region signature appears at 341–345 (KFSTS). Thr344 contacts ATP.

Belongs to the class-I aminoacyl-tRNA synthetase family. MetG type 1 subfamily. In terms of assembly, monomer. Zn(2+) serves as cofactor.

It is found in the cytoplasm. It catalyses the reaction tRNA(Met) + L-methionine + ATP = L-methionyl-tRNA(Met) + AMP + diphosphate. Is required not only for elongation of protein synthesis but also for the initiation of all mRNA translation through initiator tRNA(fMet) aminoacylation. The protein is Methionine--tRNA ligase of Maricaulis maris (strain MCS10) (Caulobacter maris).